The sequence spans 575 residues: MTTMLKGIAASSGVAVAKAYLLVQPDLSFETKTIADTANEEARLDAALATSQSELQLIKDKAVTTLGEEAASVFDAHMMVLADPDMTAQIKAVINDKKVNAESALKEVTDMFIGIFEGMTDNAYMQERAADIKDVTKRVLAHLLGVKLPSPALIDEEVIIVAEDLTPSDTAQLDKKFVKAFVTNIGGRTSHSAIMARTLEIPAVLGTNNITELVSEGQLLAVSGLTGEVILDPSTEQQSEFHKAGDAYAAQKAEWAALKDAETVTADGRHYELAANIGTPKDVEGVNDNGAEAIGLYRTEFLYMDAQDFPTEDDQYEAYKAVLEGMNGKPVVVRTMDIGGDKTLPYFDLPKEMNPFLGWRALRISLSTAGDGMFRTQLRALLRASVHGQLRIMFPMVALVTEFRAAKKIYDEEKSKLIAEGVPVAEGIEVGIMIEIPAAAMLADQFAKEVDFFSIGTNDLIQYTMAADRMNEQVSYLYQPYNPSILRLINNVIKAAHAEGKWAGMCGEMAGDQTAVPLLMGMGLDEFSMSATSVLQTRSLMKRLDSKKMEELSSKALSECATMEEVIALVEEYTK.

The active-site Tele-phosphohistidine intermediate is H191. Positions 298 and 334 each coordinate phosphoenolpyruvate. Residues E435 and D459 each coordinate Mg(2+). Residues 458–459 and R469 contribute to the phosphoenolpyruvate site; that span reads ND. The active-site Proton donor is the C506.

The protein belongs to the PEP-utilizing enzyme family. Homodimer. Mg(2+) is required as a cofactor.

It localises to the cytoplasm. The enzyme catalyses L-histidyl-[protein] + phosphoenolpyruvate = N(pros)-phospho-L-histidyl-[protein] + pyruvate. In terms of biological role, general (non sugar-specific) component of the phosphoenolpyruvate-dependent sugar phosphotransferase system (sugar PTS). This major carbohydrate active-transport system catalyzes the phosphorylation of incoming sugar substrates concomitantly with their translocation across the cell membrane. Enzyme I transfers the phosphoryl group from phosphoenolpyruvate (PEP) to the phosphoryl carrier protein (HPr). The protein is Phosphoenolpyruvate-protein phosphotransferase (ptsI) of Lactococcus lactis subsp. cremoris (Streptococcus cremoris).